Consider the following 264-residue polypeptide: Glycerol uptake facilitator protein (264 aa).

The Cytoplasmic portion of the chain corresponds to 1-3; it reads MDK. The helical transmembrane segment at 4–32 threads the bilayer; the sequence is SLKANCIGEFLGTALLIFFGVGCVAALKV. The Periplasmic segment spans residues 33-37; the sequence is AGASF. The helical transmembrane segment at 38–58 threads the bilayer; sequence GLWEISIMWGMGVALAVYATA. Over 59–61 the chain is Cytoplasmic; it reads GLS. An intramembrane segment occupies 62 to 65; sequence GAHL. The NPA 1 motif lies at 66–68; the sequence is NPA. An intramembrane region (helical) is located at residues 66–76; it reads NPAVTIALWKF. The Cytoplasmic segment spans residues 77–82; sequence ACFDGK. The helical transmembrane segment at 83–106 threads the bilayer; that stretch reads KVIPYIISQMLGAFFAAALVYALY. Topologically, residues 107–141 are periplasmic; the sequence is RNVFIDYETVHNIVRGTQESLSLAGTFSTYPHPSL. A helical membrane pass occupies residues 142–167; it reads SIGGAFAVEFVITAILMALIMALTDD. At 168 to 175 the chain is on the cytoplasmic side; the sequence is GNGVPRGP. The chain crosses the membrane as a helical span at residues 176–192; it reads LAPLLIGILIAVIGGAM. Topologically, residues 193–196 are periplasmic; the sequence is GPLT. Residues 197 to 200 lie within the membrane without spanning it; that stretch reads GFAM. The NPA 2 signature appears at 201 to 203; the sequence is NPA. The segment at residues 201-214 is an intramembrane region (helical); it reads NPARDFGPKFFAYL. Residues 215–229 lie on the Periplasmic side of the membrane; the sequence is AGWGELALTGGREIP. The helical transmembrane segment at 230 to 252 threads the bilayer; the sequence is YFIVPMVAPVLGALAGAWLYKKA. At 253–264 the chain is on the cytoplasmic side; that stretch reads IGGNLPCNCGCE.

The protein belongs to the MIP/aquaporin (TC 1.A.8) family.

Its subcellular location is the cell inner membrane. The catalysed reaction is glycerol(in) = glycerol(out). Functionally, mediates glycerol diffusion across the cytoplasmic membrane via a pore-type mechanism. This chain is Glycerol uptake facilitator protein (glpF), found in Haemophilus influenzae (strain ATCC 51907 / DSM 11121 / KW20 / Rd).